The chain runs to 127 residues: 3-aminoacrylate deaminase RutC (127 aa).

The protein belongs to the RutC family.

The enzyme catalyses (Z)-3-aminoacrylate + H2O + H(+) = 3-oxopropanoate + NH4(+). Functionally, involved in pyrimidine catabolism. Catalyzes the deamination of 3-aminoacrylate to malonic semialdehyde, a reaction that can also occur spontaneously. RutC may facilitate the reaction and modulate the metabolic fitness, rather than catalyzing essential functions. The polypeptide is 3-aminoacrylate deaminase RutC (Pseudomonas savastanoi pv. phaseolicola (strain 1448A / Race 6) (Pseudomonas syringae pv. phaseolicola (strain 1448A / Race 6))).